A 74-amino-acid polypeptide reads, in one-letter code: Porwaprin-a (74 aa).

The signal sequence occupies residues 1–24 (MSSGGLLLLLGLLTLWEVLTPVSS). The WAP domain maps to 27 to 71 (RPKKLGLCPPRPQKPCVKECKNDWSCPGQQKCCNYGCIDECRDPI). Disulfide bonds link cysteine 34-cysteine 59, cysteine 42-cysteine 63, cysteine 46-cysteine 58, and cysteine 52-cysteine 67.

It belongs to the venom waprin family. As to expression, expressed by the venom gland.

It localises to the secreted. Damages membranes of susceptible bacteria. Has no hemolytic activity. Not toxic to mice. Does not inhibit the proteinases elastase and cathepsin G. This Pseudechis porphyriacus (Red-bellied black snake) protein is Porwaprin-a.